We begin with the raw amino-acid sequence, 560 residues long: Putative transport protein VIBHAR_02636 (560 aa).

A run of 5 helical transmembrane segments spans residues 8-28 (LLEQ…LAFG), 37-57 (LGNS…GFSF), 66-86 (FMLF…GIFF), 91-111 (HYFI…YFCS), and 164-184 (VGYA…AKLL). 2 consecutive RCK C-terminal domains span residues 205–292 (LGNS…FRNG) and 293–376 (KEVF…KIGF). 6 helical membrane passes run 386 to 406 (LLAF…TMTF), 409 to 429 (VSFS…LGFL), 450 to 470 (LGLM…IFEH), 478 to 498 (IIGL…LVGA), 505 to 525 (SALL…MDVV), and 539 to 559 (AGTY…LIIL).

The protein belongs to the AAE transporter (TC 2.A.81) family. YbjL subfamily.

It is found in the cell membrane. This chain is Putative transport protein VIBHAR_02636, found in Vibrio campbellii (strain ATCC BAA-1116).